A 453-amino-acid chain; its full sequence is UDP-N-acetylmuramoylalanine--D-glutamate ligase (453 aa).

ATP is bound at residue 115-121; that stretch reads GTNGKTT.

The protein belongs to the MurCDEF family.

Its subcellular location is the cytoplasm. The enzyme catalyses UDP-N-acetyl-alpha-D-muramoyl-L-alanine + D-glutamate + ATP = UDP-N-acetyl-alpha-D-muramoyl-L-alanyl-D-glutamate + ADP + phosphate + H(+). Its pathway is cell wall biogenesis; peptidoglycan biosynthesis. Its function is as follows. Cell wall formation. Catalyzes the addition of glutamate to the nucleotide precursor UDP-N-acetylmuramoyl-L-alanine (UMA). The sequence is that of UDP-N-acetylmuramoylalanine--D-glutamate ligase from Geotalea daltonii (strain DSM 22248 / JCM 15807 / FRC-32) (Geobacter daltonii).